The sequence spans 105 residues: Nucleoid-associated protein lin2851 (105 aa).

The span at 1 to 16 (MRGMGNMQGMMKQMQK) shows a compositional bias: low complexity. The tract at residues 1–23 (MRGMGNMQGMMKQMQKMQKEMAK) is disordered.

It belongs to the YbaB/EbfC family. Homodimer.

The protein resides in the cytoplasm. The protein localises to the nucleoid. Its function is as follows. Binds to DNA and alters its conformation. May be involved in regulation of gene expression, nucleoid organization and DNA protection. This chain is Nucleoid-associated protein lin2851, found in Listeria innocua serovar 6a (strain ATCC BAA-680 / CLIP 11262).